The sequence spans 268 residues: Phosphatidylglycerol--prolipoprotein diacylglyceryl transferase (268 aa).

The next 4 membrane-spanning stretches (helical) occupy residues leucine 14–tryptophan 34, leucine 57–tyrosine 77, phenylalanine 90–phenylalanine 110, and isoleucine 117–glycine 137. Arginine 140 provides a ligand contact to a 1,2-diacyl-sn-glycero-3-phospho-(1'-sn-glycerol). 3 helical membrane-spanning segments follow: residues glutamine 174–isoleucine 194, tyrosine 200–phenylalanine 220, and glycine 238–isoleucine 258.

This sequence belongs to the Lgt family.

Its subcellular location is the cell inner membrane. It catalyses the reaction L-cysteinyl-[prolipoprotein] + a 1,2-diacyl-sn-glycero-3-phospho-(1'-sn-glycerol) = an S-1,2-diacyl-sn-glyceryl-L-cysteinyl-[prolipoprotein] + sn-glycerol 1-phosphate + H(+). The protein operates within protein modification; lipoprotein biosynthesis (diacylglyceryl transfer). In terms of biological role, catalyzes the transfer of the diacylglyceryl group from phosphatidylglycerol to the sulfhydryl group of the N-terminal cysteine of a prolipoprotein, the first step in the formation of mature lipoproteins. In Francisella tularensis subsp. mediasiatica (strain FSC147), this protein is Phosphatidylglycerol--prolipoprotein diacylglyceryl transferase.